We begin with the raw amino-acid sequence, 664 residues long: Frizzled-3 (664 aa).

An N-terminal signal peptide occupies residues 1–16; the sequence is MAAYLISFIWVSVILA. Residues 17–204 are Extracellular-facing; the sequence is QKSMGHSLFA…REELSFARYF (188 aa). In terms of domain architecture, FZ spans 22 to 135; it reads HSLFACEPIT…CSRFPDCDEP (114 aa). 5 disulfides stabilise this stretch: C27–C88, C35–C81, C72–C109, C98–C132, and C102–C126. N41 carries N-linked (GlcNAc...) asparagine glycosylation. A helical membrane pass occupies residues 205-225; that stretch reads IGVISIVCLSATLFTFLTFLI. Topologically, residues 226–236 are cytoplasmic; that stretch reads DVTRFRYPERP. A helical membrane pass occupies residues 237–257; sequence IIFYAVCYMMVSLIFFIGFLL. Residues 258 to 287 are Extracellular-facing; that stretch reads EDKVACNGANPSQYKASTVTQGSHNKACTM. A helical membrane pass occupies residues 288-308; that stretch reads LFMVLYFFTMAGSVWWVILTI. Topologically, residues 309–327 are cytoplasmic; sequence TWFLAAVPKWGSEAIEKKA. The helical transmembrane segment at 328-348 threads the bilayer; it reads LLFHASAWGIPGTLTIILLAM. The Extracellular portion of the chain corresponds to 349 to 373; sequence NKIEGDNISGVCFVGLYDVHALRYF. N-linked (GlcNAc...) asparagine glycosylation occurs at N355. The helical transmembrane segment at 374-394 threads the bilayer; that stretch reads VLAPLCLDVVVGVSLLLAGII. At 395–419 the chain is on the cytoplasmic side; sequence SLNRVRIEIPLEKENQDKLVKFMIR. A helical transmembrane segment spans residues 420–440; the sequence is IGVFSILYLVPLLVVIGCYFY. The Extracellular portion of the chain corresponds to 441 to 476; the sequence is EQAYRGVWETTWVQERCREYHIPCPYKVTQTSRPDL. A helical membrane pass occupies residues 477-497; the sequence is ILFLMKYLMLLVVGIPSVFWV. Topologically, residues 498 to 664 are cytoplasmic; the sequence is GSKKTCFEWA…RVIEADATSA (167 aa). Positions 501–506 match the Lys-Thr-X-X-X-Trp motif, mediates interaction with the PDZ domain of Dvl family members motif; that stretch reads KTCFEW. Residues 537–664 form a disordered region; the sequence is RDPNTPIVRK…RVIEADATSA (128 aa). Composition is skewed to polar residues over residues 549–564 and 573–585; these read GTSTQGTSTHASSTQL and KAGSVQSKVSSYH.

It belongs to the G-protein coupled receptor Fz/Smo family. Expression restricted to the early nervous system.

Its subcellular location is the membrane. It is found in the cell membrane. The protein resides in the cell surface. The protein localises to the apical cell membrane. Its function is as follows. Receptor for Wnt proteins. Most of frizzled receptors are coupled to the beta-catenin canonical signaling pathway, which leads to the activation of disheveled proteins, inhibition of GSK-3 kinase, nuclear accumulation of beta-catenin and activation of Wnt target genes. A second signaling pathway involving PKC and calcium fluxes has been seen for some family members, but it is not yet clear if it represents a distinct pathway or if it can be integrated in the canonical pathway, as PKC seems to be required for Wnt-mediated inactivation of GSK-3 kinase. Both pathways seem to involve interactions with G-proteins. Activated by Wnt8. Involved in transduction and intercellular transmission of polarity information during tissue morphogenesis and/or in differentiated tissues. Plays a role in controlling early axon growth and guidance processes necessary for the formation of a subset of central and peripheral major fiber tracts. Involved in the migration of cranial neural crest cells. May also be implicated in the transmission of sensory information from the trunk and limbs to the brain. Controls commissural sensory axons guidance after midline crossing along the anterior-posterior axis in the developing spinal cord in a Wnt-dependent signaling pathway. Together with FZD6, is involved in the neural tube closure and plays a role in the regulation of the establishment of planar cell polarity (PCP). Promotes neurogenesis by maintaining sympathetic neuroblasts within the cell cycle in a beta-catenin-dependent manner. The sequence is that of Frizzled-3 (fzd3) from Xenopus laevis (African clawed frog).